We begin with the raw amino-acid sequence, 799 residues long: Rho GTPase-activating protein gacI (799 aa).

The Rho-GAP domain occupies 226 to 451 (IKLEEVFARE…LLVEHVLTIF (226 aa)). Residues 472-520 (RSQSDISSQTKPLPSLPTSPQNRSAIITGDSSSPSLNTPPVKSSLNSSD) show a composition bias toward polar residues. Disordered stretches follow at residues 472–572 (RSQS…PTSN) and 741–799 (EKQQ…LSNQ). The segment covering 525 to 549 (DNGSNNNNNNNTTNTITNNGIADTA) has biased composition (low complexity). Residues 550–568 (TPPPPTTPTAPTTPPPPTT) show a composition bias toward pro residues. Low complexity-rich tracts occupy residues 743–752 (QQQQQQQQTN) and 759–791 (ISSN…LNSS).

It localises to the cytoplasm. Its function is as follows. Rho GTPase-activating protein involved in the signal transduction pathway. In Dictyostelium discoideum (Social amoeba), this protein is Rho GTPase-activating protein gacI (gacI).